The primary structure comprises 946 residues: Isoleucine--tRNA ligase (946 aa).

The short motif at proline 58–histidine 68 is the 'HIGH' region element. Residue glutamate 568 coordinates L-isoleucyl-5'-AMP. The 'KMSKS' region motif lies at lysine 609–serine 613. Lysine 612 provides a ligand contact to ATP. Cysteine 908, cysteine 911, cysteine 928, and cysteine 931 together coordinate Zn(2+).

Belongs to the class-I aminoacyl-tRNA synthetase family. IleS type 1 subfamily. In terms of assembly, monomer. Zn(2+) is required as a cofactor.

Its subcellular location is the cytoplasm. The catalysed reaction is tRNA(Ile) + L-isoleucine + ATP = L-isoleucyl-tRNA(Ile) + AMP + diphosphate. Catalyzes the attachment of isoleucine to tRNA(Ile). As IleRS can inadvertently accommodate and process structurally similar amino acids such as valine, to avoid such errors it has two additional distinct tRNA(Ile)-dependent editing activities. One activity is designated as 'pretransfer' editing and involves the hydrolysis of activated Val-AMP. The other activity is designated 'posttransfer' editing and involves deacylation of mischarged Val-tRNA(Ile). This chain is Isoleucine--tRNA ligase, found in Chromohalobacter salexigens (strain ATCC BAA-138 / DSM 3043 / CIP 106854 / NCIMB 13768 / 1H11).